Consider the following 194-residue polypeptide: dCTP deaminase (194 aa).

DCTP contacts are provided by residues 110 to 115 (RSSLAR), aspartate 128, 136 to 138 (VLE), tyrosine 171, lysine 178, and glutamine 182. Residue glutamate 138 is the Proton donor/acceptor of the active site. The disordered stretch occupies residues 175–194 (KDAKYKNQQSAVSSRINQDD). A compositionally biased stretch (polar residues) spans 180 to 194 (KNQQSAVSSRINQDD).

The protein belongs to the dCTP deaminase family. As to quaternary structure, homotrimer.

The enzyme catalyses dCTP + H2O + H(+) = dUTP + NH4(+). The protein operates within pyrimidine metabolism; dUMP biosynthesis; dUMP from dCTP (dUTP route): step 1/2. Catalyzes the deamination of dCTP to dUTP. In Actinobacillus pleuropneumoniae serotype 5b (strain L20), this protein is dCTP deaminase.